Reading from the N-terminus, the 348-residue chain is tRNA N6-adenosine threonylcarbamoyltransferase (348 aa).

Fe cation-binding residues include histidine 120 and histidine 124. Residues 143 to 147 (LVSGG), aspartate 176, glycine 189, and asparagine 282 each bind substrate. Residue aspartate 310 coordinates Fe cation.

It belongs to the KAE1 / TsaD family. Fe(2+) is required as a cofactor.

The protein localises to the cytoplasm. The enzyme catalyses L-threonylcarbamoyladenylate + adenosine(37) in tRNA = N(6)-L-threonylcarbamoyladenosine(37) in tRNA + AMP + H(+). Its function is as follows. Required for the formation of a threonylcarbamoyl group on adenosine at position 37 (t(6)A37) in tRNAs that read codons beginning with adenine. Is involved in the transfer of the threonylcarbamoyl moiety of threonylcarbamoyl-AMP (TC-AMP) to the N6 group of A37, together with TsaE and TsaB. TsaD likely plays a direct catalytic role in this reaction. This chain is tRNA N6-adenosine threonylcarbamoyltransferase, found in Paracidovorax citrulli (strain AAC00-1) (Acidovorax citrulli).